The primary structure comprises 71 residues: Protein SlyX homolog (71 aa).

This sequence belongs to the SlyX family.

The protein is Protein SlyX homolog of Stutzerimonas stutzeri (strain A1501) (Pseudomonas stutzeri).